Consider the following 461-residue polypeptide: NADP-specific glutamate dehydrogenase (461 aa).

Residue Lys115 is part of the active site.

Belongs to the Glu/Leu/Phe/Val dehydrogenases family. In terms of assembly, homohexamer.

It carries out the reaction L-glutamate + NADP(+) + H2O = 2-oxoglutarate + NH4(+) + NADPH + H(+). The chain is NADP-specific glutamate dehydrogenase (GDH) from Penicillium chrysogenum (Penicillium notatum).